Consider the following 627-residue polypeptide: Phosphomethylpyrimidine synthase (627 aa).

The segment covering 1 to 24 (MSATQKNNITRLEQLDRQSTQPFP) has biased composition (polar residues). Residues 1-29 (MSATQKNNITRLEQLDRQSTQPFPNSRKV) form a disordered region. Residues Asn231, Met260, Tyr289, His325, 345 to 347 (SRG), 386 to 389 (DGLR), and Glu425 contribute to the substrate site. A Zn(2+)-binding site is contributed by His429. Tyr452 is a binding site for substrate. His493 is a Zn(2+) binding site. [4Fe-4S] cluster-binding residues include Cys573, Cys576, and Cys581.

The protein belongs to the ThiC family. Homodimer. Requires [4Fe-4S] cluster as cofactor.

It carries out the reaction 5-amino-1-(5-phospho-beta-D-ribosyl)imidazole + S-adenosyl-L-methionine = 4-amino-2-methyl-5-(phosphooxymethyl)pyrimidine + CO + 5'-deoxyadenosine + formate + L-methionine + 3 H(+). The protein operates within cofactor biosynthesis; thiamine diphosphate biosynthesis. In terms of biological role, catalyzes the synthesis of the hydroxymethylpyrimidine phosphate (HMP-P) moiety of thiamine from aminoimidazole ribotide (AIR) in a radical S-adenosyl-L-methionine (SAM)-dependent reaction. In Pseudomonas paraeruginosa (strain DSM 24068 / PA7) (Pseudomonas aeruginosa (strain PA7)), this protein is Phosphomethylpyrimidine synthase.